The chain runs to 652 residues: MGSVNNEEKTLIEPQRLLRKNTWHPEVDDSEVPPSVFPEYPVHKAIQKTSDSFRKRNYSAGDYVIAPLGGEREGSSLTHSWTFQPGKHNQRLYSDNFQEAQRQWKRLQEWGEVKETKKIRKRFDRFSGRKYINHYEIIKELGRGMHGKVKLGRDTVTRELLAIKIIPKTERRPKLGRANASSQKEKVRREIAILKKCVHPNVVRLREVIDDPSSTKVYLVLEYMSGGEVPWTDCDSPVLSISEARQYFRDVVLGLEYLHYQGIIHRDIKPANLLLNSSNCVKISDFGVSYIANAGLNEDNDVELAKTVGTPAFFAPELCWTDLDRPRPKISEAIDVWALGVTLFCLLFGRCPFNASMEYELFDKIVNERLNIPSTPDIGEEGRDLLKRLLCKDPEQRITLVEVKLHPWTLDGLKDPEKWLQNTDPSTVSRVEVSTDEVASAISLVGRLRRKLGKLFRFRRPKARVFDSSSSVPSDSSICRPESSGNSSIGLSASELSDSFNRLAVNESQKDRERKQVHPVEMGRNSSEKKPRCDFGWDYEAFPNDNQDADDACSYNTGDSIPQVSKSINGHFETYSRTSMDTDDVASFESPNAKHEESGMPVVTFRNYENYDANPSNFHPVVPGFVSSPNLHLAGGSDTPIYCIEHSFTPTN.

At Y58 the chain carries Phosphotyrosine. Residue S59 is modified to Phosphoserine. A Phosphotyrosine modification is found at Y63. Positions 135–409 (YEIIKELGRG…LVEVKLHPWT (275 aa)) constitute a Protein kinase domain. ATP contacts are provided by residues 141 to 149 (LGRGMHGKV) and K164. D267 acts as the Proton acceptor in catalysis. Disordered regions lie at residues 467-491 (DSSS…SIGL) and 506-529 (NESQ…SSEK). Residues 508–518 (SQKDRERKQVH) are compositionally biased toward basic and acidic residues.

Belongs to the protein kinase superfamily. Ser/Thr protein kinase family.

It is found in the cytoplasm. It carries out the reaction L-seryl-[protein] + ATP = O-phospho-L-seryl-[protein] + ADP + H(+). The enzyme catalyses L-threonyl-[protein] + ATP = O-phospho-L-threonyl-[protein] + ADP + H(+). Functionally, involved in actin localization and thus in polarized cell growth. The chain is Serine/threonine-protein kinase ssp1 (ssp1) from Schizosaccharomyces pombe (strain 972 / ATCC 24843) (Fission yeast).